A 248-amino-acid polypeptide reads, in one-letter code: Probable transcriptional regulatory protein Nham_3525 (248 aa).

Residues 1 to 21 form a disordered region; that stretch reads MAGHSQFKNIMHRKGRQDAQK.

The protein belongs to the TACO1 family.

Its subcellular location is the cytoplasm. The polypeptide is Probable transcriptional regulatory protein Nham_3525 (Nitrobacter hamburgensis (strain DSM 10229 / NCIMB 13809 / X14)).